The sequence spans 347 residues: DNA-directed RNA polymerase subunit alpha (347 aa).

Residues 1 to 243 (MLIKQGERLI…DQISVFINFD (243 aa)) form an alpha N-terminal domain (alpha-NTD) region. Positions 260–347 (VNEHLFKSID…EWKRKQQNEA (88 aa)) are alpha C-terminal domain (alpha-CTD).

It belongs to the RNA polymerase alpha chain family. In terms of assembly, homodimer. The RNAP catalytic core consists of 2 alpha, 1 beta, 1 beta' and 1 omega subunit. When a sigma factor is associated with the core the holoenzyme is formed, which can initiate transcription.

It carries out the reaction RNA(n) + a ribonucleoside 5'-triphosphate = RNA(n+1) + diphosphate. Functionally, DNA-dependent RNA polymerase catalyzes the transcription of DNA into RNA using the four ribonucleoside triphosphates as substrates. In Desulfovibrio desulfuricans (strain ATCC 27774 / DSM 6949 / MB), this protein is DNA-directed RNA polymerase subunit alpha.